The sequence spans 313 residues: MRIREGHLINDSAEGPIGLRTRLMGYIGLTKPRVIELLLVTTIPAMLLADRGTVDPLLIINTLVGGLLAAAGANTLNCVADADIDKKMKRTERRALARATVPRSHALIFGLTLSVASFFWLWSTTNMLSAHLAGATIAFYVLVYTLLLKRRTSQNVVWGGAAGCMPVMIGWSAVTGTIQWPALVMFLIIFFWTPPHTWALAMRYKEDYEAAGVPMLPVVATEQQVTKQILVYTWLTVLATLALALTTGWLYASVAILAGTWFLVMAHQLYAGVKRGEAVKPLRLFLQSNNYLAVVFVALAVDSALALPTLLHV.

The next 8 membrane-spanning stretches (helical) occupy residues 34-54 (VIEL…RGTV), 56-76 (PLLI…ANTL), 105-125 (HALI…WSTT), 128-148 (LSAH…TLLL), 152-172 (TSQN…IGWS), 173-193 (AVTG…FFWT), 237-257 (VLAT…VAIL), and 291-311 (YLAV…PTLL).

The protein belongs to the UbiA prenyltransferase family. Protoheme IX farnesyltransferase subfamily.

The protein resides in the cell membrane. The enzyme catalyses heme b + (2E,6E)-farnesyl diphosphate + H2O = Fe(II)-heme o + diphosphate. The protein operates within porphyrin-containing compound metabolism; heme O biosynthesis; heme O from protoheme: step 1/1. Converts heme B (protoheme IX) to heme O by substitution of the vinyl group on carbon 2 of heme B porphyrin ring with a hydroxyethyl farnesyl side group. The chain is Protoheme IX farnesyltransferase from Mycolicibacterium gilvum (strain PYR-GCK) (Mycobacterium gilvum (strain PYR-GCK)).